The chain runs to 281 residues: Clc-like protein 5 (281 aa).

The next 4 membrane-spanning stretches (helical) occupy residues L13–P33, V104–F124, I137–F157, and Y184–V204.

It belongs to the Clc family.

The protein localises to the membrane. In Caenorhabditis elegans, this protein is Clc-like protein 5 (clc-5).